Consider the following 327-residue polypeptide: G-protein coupled receptor 55 (327 aa).

Residues 1–20 (MSQPERDNCSFDSVDKLTRT) are Extracellular-facing. A glycan (N-linked (GlcNAc...) asparagine) is linked at Asn-8. Residues 21–41 (LQLAVHIPTFLLGLVLNLLAI) form a helical membrane-spanning segment. Residues 42–57 (RGFSAFLKKRKLDYIA) are Cytoplasmic-facing. Residues 58–78 (TSIYMINLAVFDLLLVLSLPF) traverse the membrane as a helical segment. The Extracellular portion of the chain corresponds to 79–93 (KMVLPQVESPLPSFC). The helical transmembrane segment at 94-114 (TLVECLYFISMYGSVFTICFI) threads the bilayer. Topologically, residues 115-136 (SLDRFLAIQYPILASHLRSPRK) are cytoplasmic. A helical membrane pass occupies residues 137–157 (TFGICCIIWMLVWIGSIPIYT). Over 158 to 179 (FHREVERYKCFHNMSDVTWSAS) the chain is Extracellular. N-linked (GlcNAc...) asparagine glycosylation is present at Asn-170. The chain crosses the membrane as a helical span at residues 180–200 (VFFPLEIFGFLLPMGIMGFCS). Topologically, residues 201 to 239 (YRSIHILLRRPDSTEDWVQQRDTKGWVQKRACIWTIATN) are cytoplasmic. The helical transmembrane segment at 240-260 (LVIFVVSFLPVHLGFFLQYLV) threads the bilayer. At 261–279 (RNRFILDCRMKQGISLFLQ) the chain is on the extracellular side. The helical transmembrane segment at 280 to 300 (LSLCFSNINCCLDVFCYYFVI) threads the bilayer. Topologically, residues 301-327 (KEFRMRIKAHRPSTIKLVNQDTMVSRG) are cytoplasmic.

It belongs to the G-protein coupled receptor 1 family. In terms of tissue distribution, highly expressed in splenic plasma cells.

The protein resides in the cell membrane. G-protein coupled receptor that binds to several ligands including 2-arachidonoyl lysophosphatidylinositol or lysophosphatidylglucoside with high affinity, leading to rapid and transient activation of numerous intracellular signaling pathways. Induces the Ca(2+) release from intracellular stores via ERK, the heterotrimeric G protein GNA13 and RHOA leading to morphological changes including cell rounding and stress fiber formation. In macrophages, acts downstream of lysophosphatidylglucoside to inhibit the translocation of the phospholipid-transporting ABCA1 to plasma membrane and subsequent cholesterol efflux leading to lipid accumulation and foam cell formation. May be involved in hyperalgesia associated with inflammatory and neuropathic pain. This chain is G-protein coupled receptor 55 (Gpr55), found in Mus musculus (Mouse).